Consider the following 88-residue polypeptide: Kunitz-type kappaPI-theraphotoxin-Hs1b (88 aa).

Positions 1–27 are cleaved as a signal peptide; sequence MGIARILSAVLFLSVLFVVTFPALLSA. A propeptide spanning residues 28–33 is cleaved from the precursor; sequence DHHDGR. Residues 37–85 enclose the BPTI/Kunitz inhibitor domain; sequence CRLPSDRGRCKASFERWYFNGRTCAKFIYGGCGGNGNKFPTQEACMKRC. Intrachain disulfides connect Cys37/Cys85, Cys46/Cys68, and Cys60/Cys81.

This sequence belongs to the venom Kunitz-type family. 02 (native) subfamily. In terms of tissue distribution, expressed by the venom gland.

The protein localises to the secreted. In terms of biological role, serine protease inhibitor that inhibits trypsin at a molar ratio of 1:1. The polypeptide is Kunitz-type kappaPI-theraphotoxin-Hs1b (Cyriopagopus schmidti (Chinese bird spider)).